The chain runs to 275 residues: NH(3)-dependent NAD(+) synthetase (275 aa).

Residue 46–53 (GISGGQDS) coordinates ATP. Aspartate 52 provides a ligand contact to Mg(2+). Deamido-NAD(+) is bound at residue arginine 140. Threonine 160 provides a ligand contact to ATP. Mg(2+) is bound at residue glutamate 165. Deamido-NAD(+) contacts are provided by lysine 173 and aspartate 180. Lysine 189 and threonine 211 together coordinate ATP. Deamido-NAD(+) is bound at residue 260–261 (HK).

This sequence belongs to the NAD synthetase family. Homodimer.

It catalyses the reaction deamido-NAD(+) + NH4(+) + ATP = AMP + diphosphate + NAD(+) + H(+). Its pathway is cofactor biosynthesis; NAD(+) biosynthesis; NAD(+) from deamido-NAD(+) (ammonia route): step 1/1. Its function is as follows. Catalyzes the ATP-dependent amidation of deamido-NAD to form NAD. Uses ammonia as a nitrogen source. The sequence is that of NH(3)-dependent NAD(+) synthetase from Salmonella choleraesuis (strain SC-B67).